The following is a 121-amino-acid chain: Large ribosomal subunit protein bL12 (121 aa).

Belongs to the bacterial ribosomal protein bL12 family. Homodimer. Part of the ribosomal stalk of the 50S ribosomal subunit. Forms a multimeric L10(L12)X complex, where L10 forms an elongated spine to which 2 to 4 L12 dimers bind in a sequential fashion. Binds GTP-bound translation factors.

Its function is as follows. Forms part of the ribosomal stalk which helps the ribosome interact with GTP-bound translation factors. Is thus essential for accurate translation. The sequence is that of Large ribosomal subunit protein bL12 from Ureaplasma parvum serovar 3 (strain ATCC 27815 / 27 / NCTC 11736).